The following is a 1357-amino-acid chain: DNA-directed RNA polymerase subunit beta (1357 aa).

It belongs to the RNA polymerase beta chain family. The RNAP catalytic core consists of 2 alpha, 1 beta, 1 beta' and 1 omega subunit. When a sigma factor is associated with the core the holoenzyme is formed, which can initiate transcription.

It carries out the reaction RNA(n) + a ribonucleoside 5'-triphosphate = RNA(n+1) + diphosphate. In terms of biological role, DNA-dependent RNA polymerase catalyzes the transcription of DNA into RNA using the four ribonucleoside triphosphates as substrates. The chain is DNA-directed RNA polymerase subunit beta from Pseudomonas savastanoi pv. phaseolicola (strain 1448A / Race 6) (Pseudomonas syringae pv. phaseolicola (strain 1448A / Race 6)).